Here is a 273-residue protein sequence, read N- to C-terminus: Nucleotide-binding protein TTHA0319 (273 aa).

An ATP-binding site is contributed by 8–15; the sequence is GLSGAGKT. 57–60 contacts GTP; that stretch reads DARA.

The protein belongs to the RapZ-like family.

In terms of biological role, displays ATPase and GTPase activities. The chain is Nucleotide-binding protein TTHA0319 from Thermus thermophilus (strain ATCC 27634 / DSM 579 / HB8).